Here is a 211-residue protein sequence, read N- to C-terminus: Large ribosomal subunit protein uL3 (211 aa).

The residue at position 150 (Gln-150) is an N5-methylglutamine.

Belongs to the universal ribosomal protein uL3 family. Part of the 50S ribosomal subunit. Forms a cluster with proteins L14 and L19. In terms of processing, methylated by PrmB.

One of the primary rRNA binding proteins, it binds directly near the 3'-end of the 23S rRNA, where it nucleates assembly of the 50S subunit. The sequence is that of Large ribosomal subunit protein uL3 from Pseudomonas fluorescens (strain ATCC BAA-477 / NRRL B-23932 / Pf-5).